Here is a 69-residue protein sequence, read N- to C-terminus: DNA-directed RNA polymerase subunit omega (69 aa).

The protein belongs to the RNA polymerase subunit omega family. As to quaternary structure, the RNAP catalytic core consists of 2 alpha, 1 beta, 1 beta' and 1 omega subunit. When a sigma factor is associated with the core the holoenzyme is formed, which can initiate transcription.

It catalyses the reaction RNA(n) + a ribonucleoside 5'-triphosphate = RNA(n+1) + diphosphate. Its function is as follows. Promotes RNA polymerase assembly. Latches the N- and C-terminal regions of the beta' subunit thereby facilitating its interaction with the beta and alpha subunits. In Geobacter metallireducens (strain ATCC 53774 / DSM 7210 / GS-15), this protein is DNA-directed RNA polymerase subunit omega.